A 618-amino-acid chain; its full sequence is Nuclear cap-binding protein subunit 3 (618 aa).

A disordered region spans residues 1-53 (MAAVRGLRVSVKAGGGAEPEPMEVEEGEVEAAAGRTSPVEATADQTSPREVVP). Residues 20–29 (EPMEVEEGEV) are compositionally biased toward acidic residues. An RNA recognition motif (RRM) domain region spans residues 117–178 (ETLYICGVDE…LSSKPTNEKG (62 aa)). A WLDD motif; essential for 7-methylguanosine-containing mRNA cap binding motif is present at residues 146-149 (WLDD). Disordered stretches follow at residues 170–250 (SSKP…DLRP), 342–366 (PEEPIEEEEEEEEEEEEDMDEDDRV), and 426–618 (QLKT…DTDS). Residues 174 to 188 (TNEKGQRKKDGEHRS) show a composition bias toward basic and acidic residues. The span at 205–223 (DETEEGEVEEDNPNDAEVE) shows a compositional bias: acidic residues. The segment covering 231–240 (PPETLSQAEQ) has biased composition (polar residues). Residues 344-365 (EPIEEEEEEEEEEEEDMDEDDR) are compositionally biased toward acidic residues. A compositionally biased stretch (polar residues) spans 436–450 (SDSAGNSVKSRIGSK). Residues 451 to 468 (SHSEKPADVRLILEEKRQ) are compositionally biased toward basic and acidic residues. The segment covering 469–481 (STASRQQSSSSGK) has biased composition (low complexity). Composition is skewed to basic and acidic residues over residues 507–517 (SRREPLSDVHS), 550–562 (PKEKDRASEKSGE), and 583–596 (IKEKEQIRQKKSRL). Residues 609 to 618 (ESSSGSDTDS) are compositionally biased toward low complexity.

Belongs to the NCBP3 family. Component of an alternative cap-binding complex (CBC) composed of NCBP1/CBP80 and NCBP3.

It is found in the nucleus. The protein resides in the cytoplasm. Associates with NCBP1/CBP80 to form an alternative cap-binding complex (CBC) which plays a key role in mRNA export. NCBP3 serves as adapter protein linking the capped RNAs (m7GpppG-capped RNA) to NCBP1/CBP80. Unlike the conventional CBC with NCBP2 which binds both small nuclear RNA (snRNA) and messenger (mRNA) and is involved in their export from the nucleus, the alternative CBC with NCBP3 does not bind snRNA and associates only with mRNA thereby playing a role in only mRNA export. This chain is Nuclear cap-binding protein subunit 3, found in Xenopus laevis (African clawed frog).